Here is a 621-residue protein sequence, read N- to C-terminus: 5-aminolevulinate synthase, mitochondrial (621 aa).

The tract at residues 76–95 is disordered; that stretch reads DAKGSLAGRPVHHKAATEST. Residues arginine 122 and serine 234 each coordinate substrate. Pyridoxal 5'-phosphate contacts are provided by serine 286, histidine 314, and threonine 359. Lysine 362 is an active-site residue. N6-(pyridoxal phosphate)lysine is present on lysine 362. Pyridoxal 5'-phosphate-binding residues include threonine 391 and threonine 392. Threonine 477 lines the substrate pocket.

It belongs to the class-II pyridoxal-phosphate-dependent aminotransferase family. In terms of assembly, homodimer. Pyridoxal 5'-phosphate is required as a cofactor.

Its subcellular location is the mitochondrion matrix. The catalysed reaction is succinyl-CoA + glycine + H(+) = 5-aminolevulinate + CO2 + CoA. It participates in porphyrin-containing compound metabolism; protoporphyrin-IX biosynthesis; 5-aminolevulinate from glycine: step 1/1. In terms of biological role, catalyzes the synthesis of 5-aminolevulinate (ALA) from succinyl-CoA and glycine, the first and rate-limiting step in heme biosynthesis. The protein is 5-aminolevulinate synthase, mitochondrial (hem1) of Agaricus bisporus (White button mushroom).